Consider the following 286-residue polypeptide: uncharacterized protein (286 aa).

Residues 4-18 and T95 each bind NAD(+); that span reads AVIGLGNMGQPIARN. Residue K171 is part of the active site. Residue K239 coordinates NAD(+).

It belongs to the HIBADH-related family.

This is an uncharacterized protein from Bacillus subtilis (strain 168).